The chain runs to 200 residues: Inner membrane-spanning protein YciB (200 aa).

5 helical membrane passes run 32 to 52 (FVAT…SYVV), 56 to 76 (VPLM…LTLV), 93 to 113 (LFAV…AILF), 126 to 146 (FLTI…EVIW), and 153 to 173 (FWVA…AMTQ).

Belongs to the YciB family.

It localises to the cell inner membrane. In terms of biological role, plays a role in cell envelope biogenesis, maintenance of cell envelope integrity and membrane homeostasis. This chain is Inner membrane-spanning protein YciB, found in Afipia carboxidovorans (strain ATCC 49405 / DSM 1227 / KCTC 32145 / OM5) (Oligotropha carboxidovorans).